The primary structure comprises 31 residues: Cytochrome b6-f complex subunit 6 (31 aa).

The helical transmembrane segment at 4-24 (ITSYFGFLLAALTITSALLIG) threads the bilayer.

Belongs to the PetL family. As to quaternary structure, the 4 large subunits of the cytochrome b6-f complex are cytochrome b6, subunit IV (17 kDa polypeptide, PetD), cytochrome f and the Rieske protein, while the 4 small subunits are PetG, PetL, PetM and PetN. The complex functions as a dimer.

The protein localises to the plastid. It is found in the chloroplast thylakoid membrane. Its function is as follows. Component of the cytochrome b6-f complex, which mediates electron transfer between photosystem II (PSII) and photosystem I (PSI), cyclic electron flow around PSI, and state transitions. PetL is important for photoautotrophic growth as well as for electron transfer efficiency and stability of the cytochrome b6-f complex. This is Cytochrome b6-f complex subunit 6 from Piper cenocladum (Ant piper).